The sequence spans 397 residues: Exodeoxyribonuclease 7 large subunit (397 aa).

It belongs to the XseA family. Heterooligomer composed of large and small subunits.

It localises to the cytoplasm. It catalyses the reaction Exonucleolytic cleavage in either 5'- to 3'- or 3'- to 5'-direction to yield nucleoside 5'-phosphates.. Its function is as follows. Bidirectionally degrades single-stranded DNA into large acid-insoluble oligonucleotides, which are then degraded further into small acid-soluble oligonucleotides. This chain is Exodeoxyribonuclease 7 large subunit, found in Anaplasma marginale (strain St. Maries).